Here is a 224-residue protein sequence, read N- to C-terminus: uncharacterized protein (224 aa).

The protein localises to the virion. This is an uncharacterized protein from Acanthamoeba polyphaga mimivirus (APMV).